A 335-amino-acid chain; its full sequence is Methyltransferase pgmE (335 aa).

The protein belongs to the methyltransferase superfamily.

The protein operates within pigment biosynthesis. It functions in the pathway secondary metabolite biosynthesis. Its function is as follows. Methyltransferase; part of the gene cluster that mediates the biosynthesis of pleosporalin A, ascomycone A, as well as a third cryptic naphthoquinone derived pigment, all responsible for the coloration of conidia. Essential for the production of pleosporalin A, but not the 2 other final products. The pathway begins with the biosynthesis of the cyclized heptaketide 3-acetonyl-1,6,8-trihydroxy-2-naphthaldehyde by the NR-PKS pgmA. The C-6 hydroxyl group is further methylated by the O-methyltransferase pgmB to yield fusarubinaldehyde which is in turn oxidized by the cytochrome P450 monooxygenase pgmC at C-9. The C-1 hydroxyl group is then methylated spontaneously. Although pgmE, pgmD and pgmH are essential for the production of pleosporalin A, it is not the case for the 2 other final products and it remains difficult to assign a specific function to each enzyme. PgmF and pgmG seem not to be involved in pigment biosynthesis although they were regulated by the cluster-specific transcription factor pgmR. The sequence is that of Methyltransferase pgmE from Aspergillus terreus (strain NIH 2624 / FGSC A1156).